A 291-amino-acid polypeptide reads, in one-letter code: N-acetylmannosamine kinase (291 aa).

Residues 5–12 (AIDIGGTK) and 132–139 (GVGGGVVS) contribute to the ATP site. Residues His-156, Cys-166, Cys-168, and Cys-173 each coordinate Zn(2+).

This sequence belongs to the ROK (NagC/XylR) family. NanK subfamily. In terms of assembly, homodimer.

It catalyses the reaction an N-acyl-D-mannosamine + ATP = an N-acyl-D-mannosamine 6-phosphate + ADP + H(+). It functions in the pathway amino-sugar metabolism; N-acetylneuraminate degradation; D-fructose 6-phosphate from N-acetylneuraminate: step 2/5. Catalyzes the phosphorylation of N-acetylmannosamine (ManNAc) to ManNAc-6-P. The protein is N-acetylmannosamine kinase of Shigella flexneri serotype 5b (strain 8401).